The sequence spans 208 residues: Small ribosomal subunit protein uS4 (208 aa).

The tract at residues 32–53 (LNRKRGKNSPGQHGASKVKMSD) is disordered. The region spanning 99 to 161 (LRLDNVVYRL…YKSNVIIKKL (63 aa)) is the S4 RNA-binding domain.

This sequence belongs to the universal ribosomal protein uS4 family. In terms of assembly, part of the 30S ribosomal subunit. Contacts protein S5. The interaction surface between S4 and S5 is involved in control of translational fidelity.

One of the primary rRNA binding proteins, it binds directly to 16S rRNA where it nucleates assembly of the body of the 30S subunit. In terms of biological role, with S5 and S12 plays an important role in translational accuracy. This chain is Small ribosomal subunit protein uS4, found in Endomicrobium trichonymphae.